The primary structure comprises 686 residues: Lysophospholipase 3 (686 aa).

The first 26 residues, 1 to 26 (MIRPLCSKIIISYIFAISQFLLAANA), serve as a signal peptide directing secretion. One can recognise a PLA2c domain in the interval 39–592 (SCPDDINLVR…KNYCWNGTLD (554 aa)). 14 N-linked (GlcNAc...) asparagine glycosylation sites follow: N56, N82, N129, N166, N221, N283, N313, N351, N495, N519, N547, N571, N588, and N614. N659 is lipidated: GPI-anchor amidated asparagine. A propeptide spans 660-686 (SGSHLSGISVKFSAMIMLTLLMFTGAV) (removed in mature form).

The protein belongs to the lysophospholipase family.

Its subcellular location is the cell membrane. It catalyses the reaction a 1-acyl-sn-glycero-3-phosphocholine + H2O = sn-glycerol 3-phosphocholine + a fatty acid + H(+). Functionally, sequentially removes both fatty acyl groups from diacylglycerophospholipids and therefore has both phospholipase A and lysophospholipase activities. Substrate preference is phosphatidylserine &gt; phosphatidylinositol. Does not cleave phosphatidylcholine, phosphatidylethanolamine, phosphatidic acid and phosphatidylinositol-bisphosphate. Mainly responsible for the degradation of phosphatidylinositol in vivo. The polypeptide is Lysophospholipase 3 (PLB3) (Saccharomyces cerevisiae (strain ATCC 204508 / S288c) (Baker's yeast)).